We begin with the raw amino-acid sequence, 891 residues long: UPF0182 protein Glov_0814 (891 aa).

7 consecutive transmembrane segments (helical) span residues 6–26, 51–71, 102–122, 164–184, 202–222, 244–264, and 266–286; these read LTPI…LLAY, GIGV…LLYA, IGVL…ALQW, FMLL…GGIA, ILLA…GFGL, TLTT…FGLW, and GTWR…MIGM.

This sequence belongs to the UPF0182 family.

It is found in the cell membrane. In Trichlorobacter lovleyi (strain ATCC BAA-1151 / DSM 17278 / SZ) (Geobacter lovleyi), this protein is UPF0182 protein Glov_0814.